We begin with the raw amino-acid sequence, 368 residues long: Chaperone protein DnaJ (368 aa).

Residues 5-70 form the J domain; sequence DYYEVLGVSK…EKRSMYDRMG (66 aa). Residues 132–210 form a CR-type zinc finger; that stretch reads GVKKTITFTA…CHGSGVADRQ (79 aa). Zn(2+) is bound by residues Cys-145, Cys-148, Cys-162, Cys-165, Cys-184, Cys-187, Cys-198, and Cys-201. CXXCXGXG motif repeat units follow at residues 145–152, 162–169, 184–191, and 198–205; these read CEVCDGKG, CRTCHGTG, CGTCRGQG, and CQSCHGSG. Positions 349–368 are disordered; it reads DGDEHSSSPKKKSFFDRLFD. A compositionally biased stretch (basic and acidic residues) spans 350 to 368; sequence GDEHSSSPKKKSFFDRLFD.

Belongs to the DnaJ family. Homodimer. Requires Zn(2+) as cofactor.

The protein resides in the cytoplasm. Functionally, participates actively in the response to hyperosmotic and heat shock by preventing the aggregation of stress-denatured proteins and by disaggregating proteins, also in an autonomous, DnaK-independent fashion. Unfolded proteins bind initially to DnaJ; upon interaction with the DnaJ-bound protein, DnaK hydrolyzes its bound ATP, resulting in the formation of a stable complex. GrpE releases ADP from DnaK; ATP binding to DnaK triggers the release of the substrate protein, thus completing the reaction cycle. Several rounds of ATP-dependent interactions between DnaJ, DnaK and GrpE are required for fully efficient folding. Also involved, together with DnaK and GrpE, in the DNA replication of plasmids through activation of initiation proteins. In Acinetobacter baylyi (strain ATCC 33305 / BD413 / ADP1), this protein is Chaperone protein DnaJ.